A 466-amino-acid chain; its full sequence is Ras-GEF domain-containing family member 1C (466 aa).

The interval 1–37 (MPQTLSASDMVTPGSLSPPPTEPTDGEQAGQPLLDGA) is disordered. Positions 34–164 (LDGAPSSASL…LLQALHQKLA (131 aa)) constitute an N-terminal Ras-GEF domain. Positions 200-446 (DPYTLAQQLT…YLASYESESP (247 aa)) constitute a Ras-GEF domain.

Functionally, guanine nucleotide exchange factor (GEF). The chain is Ras-GEF domain-containing family member 1C (RASGEF1C) from Homo sapiens (Human).